Reading from the N-terminus, the 809-residue chain is Pentatricopeptide repeat-containing protein At1g11290, chloroplastic (809 aa).

The transit peptide at 1–46 (MSSQLVQFSTVPQIPNPPSRHRHFLSERNYIPANVYEHPAALLLER) directs the protein to the chloroplast. PPR repeat units lie at residues 68 to 98 (EHFF…IDSK), 99 to 133 (LNVL…DVEP), 134 to 168 (VVYN…GFSL), 169 to 199 (DLFA…MPER), 200 to 234 (DLVS…NLKP), 235 to 269 (SFIT…GFDS), 270 to 300 (LVNI…MLER), 301 to 335 (NVVS…GVKP), 336 to 370 (TDVS…GLDR), 371 to 401 (NVSV…LQSR), 402 to 436 (TLVS…TVKP), 437 to 471 (DTFT…CLDK), 472 to 502 (NVFV…MSER), 503 to 537 (HVTT…TIKP), 538 to 568 (NGVT…MKEN), and 574 to 604 (SMDH…MPVK). Residues 609 to 684 (VYGAMLGACQ…TPGCSMVEIK (76 aa)) are type E motif. A type E(+) motif region spans residues 685–715 (NEVHSFFSGSTAHPDSKKIYAFLEKLICHIK). The tract at residues 716 to 809 (EAGYVPDTNL…NGACSCGDYW (94 aa)) is type DYW motif.

The protein belongs to the PPR family. PCMP-H subfamily.

It localises to the plastid. The protein resides in the chloroplast. Involved in multiple sites RNA editing events in chloroplasts. Involved in the editing of the site 7 of ndhB (ndhB-7) and site 5 of ndhD (ndhD-5) transcripts, which are two plastid-encoded subunits of the chloroplast NAD(P)H dehydrogenase (NDH) complex. Involved in the editing of the site 3 of rpoB (rpoB-3) transcript. Required for the activity of the NDH complex of the photosynthetic electron transport chain. Possesses low endoribonuclease activity in vitro. This chain is Pentatricopeptide repeat-containing protein At1g11290, chloroplastic (PCMP-H40), found in Arabidopsis thaliana (Mouse-ear cress).